The following is a 339-amino-acid chain: DNA-directed RNA polymerase subunit alpha (339 aa).

Positions 1 to 233 are alpha N-terminal domain (alpha-NTD); that stretch reads MVREEVAGST…DLFLPFLHAE (233 aa). Residues 264–339 form an alpha C-terminal domain (alpha-CTD) region; sequence KKGIPLNCIF…IDLLKNKLSF (76 aa).

This sequence belongs to the RNA polymerase alpha chain family. As to quaternary structure, in plastids the minimal PEP RNA polymerase catalytic core is composed of four subunits: alpha, beta, beta', and beta''. When a (nuclear-encoded) sigma factor is associated with the core the holoenzyme is formed, which can initiate transcription.

Its subcellular location is the plastid. The protein resides in the chloroplast. It carries out the reaction RNA(n) + a ribonucleoside 5'-triphosphate = RNA(n+1) + diphosphate. DNA-dependent RNA polymerase catalyzes the transcription of DNA into RNA using the four ribonucleoside triphosphates as substrates. The polypeptide is DNA-directed RNA polymerase subunit alpha (Australopyrum velutinum (Mountain wheat-grass)).